Here is a 91-residue protein sequence, read N- to C-terminus: ATP synthase subunit c 2 (91 aa).

Transmembrane regions (helical) follow at residues 4 to 24 and 53 to 73; these read FSMC…GTGI and IGLA…LIIL.

The protein belongs to the ATPase C chain family. F-type ATPases have 2 components, F(1) - the catalytic core - and F(0) - the membrane proton channel. F(1) has five subunits: alpha(3), beta(3), gamma(1), delta(1), epsilon(1). F(0) has three main subunits: a(1), b(2) and c(10-14). The alpha and beta chains form an alternating ring which encloses part of the gamma chain. F(1) is attached to F(0) by a central stalk formed by the gamma and epsilon chains, while a peripheral stalk is formed by the delta and b chains.

It is found in the cell inner membrane. F(1)F(0) ATP synthase produces ATP from ADP in the presence of a proton or sodium gradient. F-type ATPases consist of two structural domains, F(1) containing the extramembraneous catalytic core and F(0) containing the membrane proton channel, linked together by a central stalk and a peripheral stalk. During catalysis, ATP synthesis in the catalytic domain of F(1) is coupled via a rotary mechanism of the central stalk subunits to proton translocation. In terms of biological role, key component of the F(0) channel; it plays a direct role in translocation across the membrane. A homomeric c-ring of between 10-14 subunits forms the central stalk rotor element with the F(1) delta and epsilon subunits. The protein is ATP synthase subunit c 2 of Pelobacter propionicus (strain DSM 2379 / NBRC 103807 / OttBd1).